Reading from the N-terminus, the 185-residue chain is Serine/arginine-rich splicing factor RSZ21A (185 aa).

The RRM domain maps to 2–73 (ARVYVGNLDP…WRVELSRNAS (72 aa)). The CCHC-type zinc-finger motif lies at 87–104 (SKCYECGETGHFARECRL). Residues 109-185 (GGLGSGRRRS…YDNGYRRSRS (77 aa)) are disordered. Positions 114 to 131 (GRRRSRSRSRSRSPRYRR) are enriched in basic residues. 2 stretches are compositionally biased toward low complexity: residues 132–145 (SPSY…PAGR) and 152–163 (VSPARARSYSRS).

It belongs to the splicing factor SR family. In terms of processing, extensively phosphorylated on serine residues in the RS domain. As to expression, expressed in roots, leaves and immature seeds.

The protein localises to the nucleus. In terms of biological role, involved in pre-mRNA splicing. This Oryza sativa subsp. japonica (Rice) protein is Serine/arginine-rich splicing factor RSZ21A (RSZ21A).